The sequence spans 406 residues: Multifunctional CCA protein (406 aa).

G8 and R11 together coordinate ATP. The CTP site is built by G8 and R11. Mg(2+)-binding residues include D21 and D23. Residues R91, R137, and R140 each coordinate ATP. 3 residues coordinate CTP: R91, R137, and R140. Residues 228–329 (TGIHTLMVAE…IKILNKFDVW (102 aa)) form the HD domain.

The protein belongs to the tRNA nucleotidyltransferase/poly(A) polymerase family. Bacterial CCA-adding enzyme type 1 subfamily. As to quaternary structure, monomer. Can also form homodimers and oligomers. Mg(2+) is required as a cofactor. Requires Ni(2+) as cofactor.

The catalysed reaction is a tRNA precursor + 2 CTP + ATP = a tRNA with a 3' CCA end + 3 diphosphate. It catalyses the reaction a tRNA with a 3' CCA end + 2 CTP + ATP = a tRNA with a 3' CCACCA end + 3 diphosphate. Its function is as follows. Catalyzes the addition and repair of the essential 3'-terminal CCA sequence in tRNAs without using a nucleic acid template. Adds these three nucleotides in the order of C, C, and A to the tRNA nucleotide-73, using CTP and ATP as substrates and producing inorganic pyrophosphate. tRNA 3'-terminal CCA addition is required both for tRNA processing and repair. Also involved in tRNA surveillance by mediating tandem CCA addition to generate a CCACCA at the 3' terminus of unstable tRNAs. While stable tRNAs receive only 3'-terminal CCA, unstable tRNAs are marked with CCACCA and rapidly degraded. The protein is Multifunctional CCA protein of Vibrio parahaemolyticus serotype O3:K6 (strain RIMD 2210633).